Here is a 594-residue protein sequence, read N- to C-terminus: Probable translation initiation factor IF-2 (594 aa).

A tr-type G domain is found at Tyr-5–Val-224. The tract at residues Gly-14–Thr-21 is G1. Gly-14 to Thr-21 serves as a coordination point for GTP. The G2 stretch occupies residues Met-39 to His-43. The G3 stretch occupies residues Asp-80–Gly-83. Residues Asp-80–His-84 and Asn-134–Asp-137 contribute to the GTP site. Residues Asn-134–Asp-137 form a G4 region. A G5 region spans residues Ser-202–Val-204.

It belongs to the TRAFAC class translation factor GTPase superfamily. Classic translation factor GTPase family. IF-2 subfamily.

Its function is as follows. Function in general translation initiation by promoting the binding of the formylmethionine-tRNA to ribosomes. Seems to function along with eIF-2. In Caldivirga maquilingensis (strain ATCC 700844 / DSM 13496 / JCM 10307 / IC-167), this protein is Probable translation initiation factor IF-2.